A 301-amino-acid polypeptide reads, in one-letter code: GTPase Era (301 aa).

An Era-type G domain is found at 4–173 (KAGFVALIGK…LECISEHLSP (170 aa)). The tract at residues 12–19 (GKPNAGKS) is G1. 12-19 (GKPNAGKS) is a binding site for GTP. Residues 38-42 (NATRK) form a G2 region. Residues 64 to 67 (DTPG) are G3. Residues 64 to 68 (DTPGL) and 122 to 125 (SKID) contribute to the GTP site. The tract at residues 122-125 (SKID) is G4. Residues 152–154 (LSA) form a G5 region. The 77-residue stretch at 204 to 280 (LSDEIPYESD…FLNLQVIAQK (77 aa)) folds into the KH type-2 domain.

This sequence belongs to the TRAFAC class TrmE-Era-EngA-EngB-Septin-like GTPase superfamily. Era GTPase family. As to quaternary structure, monomer.

The protein localises to the cytoplasm. Its subcellular location is the cell inner membrane. Its function is as follows. An essential GTPase that binds both GDP and GTP, with rapid nucleotide exchange. Plays a role in 16S rRNA processing and 30S ribosomal subunit biogenesis and possibly also in cell cycle regulation and energy metabolism. This is GTPase Era from Helicobacter acinonychis (strain Sheeba).